We begin with the raw amino-acid sequence, 220 residues long: Ribonuclease HII (220 aa).

One can recognise an RNase H type-2 domain in the interval lysine 32 to cysteine 220. A divalent metal cation is bound by residues aspartate 38, glutamate 39, and aspartate 130.

The protein belongs to the RNase HII family. Requires Mn(2+) as cofactor. Mg(2+) is required as a cofactor.

It is found in the cytoplasm. It catalyses the reaction Endonucleolytic cleavage to 5'-phosphomonoester.. In terms of biological role, endonuclease that specifically degrades the RNA of RNA-DNA hybrids. This Brucella abortus (strain 2308) protein is Ribonuclease HII.